The sequence spans 211 residues: Dual specificity protein phosphatase 26 (211 aa).

The Tyrosine-protein phosphatase domain occupies 60 to 207 (NHADEVWPGL…LLALDRRLRQ (148 aa)). C152 serves as the catalytic Phosphocysteine intermediate.

It belongs to the protein-tyrosine phosphatase family. Non-receptor class dual specificity subfamily. Interacts with HSF4.

The protein localises to the cytoplasm. It is found in the nucleus. The protein resides in the golgi apparatus. The catalysed reaction is O-phospho-L-tyrosyl-[protein] + H2O = L-tyrosyl-[protein] + phosphate. It carries out the reaction O-phospho-L-seryl-[protein] + H2O = L-seryl-[protein] + phosphate. The enzyme catalyses O-phospho-L-threonyl-[protein] + H2O = L-threonyl-[protein] + phosphate. Its function is as follows. Inactivates MAPK1 and MAPK3 which leads to dephosphorylation of heat shock factor protein 4 and a reduction in its DNA-binding activity. This is Dual specificity protein phosphatase 26 (Dusp26) from Rattus norvegicus (Rat).